A 79-amino-acid chain; its full sequence is U-actitoxin-Oulsp1 (79 aa).

A signal peptide spans 1-21; that stretch reads MNTKLVVVFLLSAILFVSVTA. A propeptide spanning residues 22–43 is cleaved from the precursor; the sequence is SRPGKDLERDEAYETYDDENKR. A ShKT domain is found at 45 to 79; it reads CKDVFPAATCRHAKSVGNCSSEKYKRNCAITCGAC. Intrachain disulfides connect C45/C79, C54/C72, and C63/C76. The tract at residues 67 to 68 is crucial for binding to potassium channels; sequence KY.

Belongs to the sea anemone type 1 potassium channel toxin family. Type 1b subfamily. Two similar peptides (OspTx2a-p1 and -p2) are obtained after synthesis and oxidative folding. They may differ by a D-Cys at position 76 (corresponding to OspTx2a-p2). Since C-terminal Cys residues are prone to racemization during solid-phase peptide synthesis, and if the presence of a D-amino acid is correct, it is probable that OspTx2a-p1 (L-Cys-76 form) corresponds to the native peptide.

The protein resides in the secreted. Functionally, toxin that weakly blocks the two voltage-gated potassium channels on Kv1.2/KCNA2 (IC(50)=1.8-2.5 uM) and Kv1.6/KCNA6 (IC(50)=5.6-6.2 uM). The protein is U-actitoxin-Oulsp1 of Oulactis sp. (Sea anemone).